A 213-amino-acid chain; its full sequence is Putative nascent polypeptide-associated complex subunit alpha-like protein (213 aa).

Positions 1 to 46 (MPGEATETVPAIEQQLLQPQAETGSGTESDSDESVPELEEQDSTQV) are disordered. Positions 15-28 (QLLQPQAETGSGTE) are enriched in polar residues. The span at 29 to 42 (SDSDESVPELEEQD) shows a compositional bias: acidic residues. 2 positions are modified to phosphoserine: S43 and S131. The NAC-A/B domain maps to 69-134 (RRSEKKARKA…AKIEDLSQEA (66 aa)). K141 is subject to N6-acetyllysine; alternate. K141 participates in a covalent cross-link: Glycyl lysine isopeptide (Lys-Gly) (interchain with G-Cter in SUMO2); alternate. T160 carries the phosphothreonine modification. S165, S185, and S201 each carry phosphoserine. The UBA domain occupies 175–211 (VEIKDIELVLSQANVWGAKAVRALKNSNDIVNAIMEL). At T212 the chain carries Phosphothreonine.

Belongs to the NAC-alpha family.

In Homo sapiens (Human), this protein is Putative nascent polypeptide-associated complex subunit alpha-like protein.